Here is a 402-residue protein sequence, read N- to C-terminus: Alkane 1-monooxygenase (402 aa).

The next 4 membrane-spanning stretches (helical) occupy residues 20–40, 42–62, 89–109, and 114–134; these read YFWI…WLAN, TGWG…LPLL, VLTY…AWWV, and MSWF…GLAL. 2 residues coordinate Fe cation: His138 and His142. Residues 146 to 166 form a helical membrane-spanning segment; that stretch reads AFDRWMAKIVLAVVGYGHFFI. 3 residues coordinate Fe cation: His168, His172, and His173. The helical transmembrane segment at 236 to 256 threads the bilayer; the sequence is VVLYTLLLAFFGPKMLVFLPI. Residues His312, His315, and His316 each coordinate Fe cation.

The protein belongs to the fatty acid desaturase type 1 family. AlkB subfamily. It depends on Fe(3+) as a cofactor.

It localises to the cell inner membrane. The enzyme catalyses octane + 2 reduced [rubredoxin] + O2 + 2 H(+) = 2 oxidized [rubredoxin] + octan-1-ol + H2O. It functions in the pathway hydrocarbon metabolism; alkane degradation. Its function is as follows. Catalyzes the hydroxylation of n-alkanes in the presence of a NADH-rubredoxin reductase and rubredoxin. This is Alkane 1-monooxygenase (alkB) from Pseudomonas putida (Arthrobacter siderocapsulatus).